Reading from the N-terminus, the 60-residue chain is Large ribosomal subunit protein uL30 (60 aa).

It belongs to the universal ribosomal protein uL30 family. As to quaternary structure, part of the 50S ribosomal subunit.

In Streptococcus mutans serotype c (strain ATCC 700610 / UA159), this protein is Large ribosomal subunit protein uL30.